A 169-amino-acid chain; its full sequence is S-ribosylhomocysteine lyase (169 aa).

3 residues coordinate Fe cation: His-54, His-58, and Cys-128.

Belongs to the LuxS family. As to quaternary structure, homodimer. Fe cation serves as cofactor.

It carries out the reaction S-(5-deoxy-D-ribos-5-yl)-L-homocysteine = (S)-4,5-dihydroxypentane-2,3-dione + L-homocysteine. Functionally, involved in the synthesis of autoinducer 2 (AI-2) which is secreted by bacteria and is used to communicate both the cell density and the metabolic potential of the environment. The regulation of gene expression in response to changes in cell density is called quorum sensing. Catalyzes the transformation of S-ribosylhomocysteine (RHC) to homocysteine (HC) and 4,5-dihydroxy-2,3-pentadione (DPD). The sequence is that of S-ribosylhomocysteine lyase from Shewanella sp. (strain MR-4).